Consider the following 83-residue polypeptide: ATP synthase subunit c, chloroplastic (83 aa).

Helical transmembrane passes span P3–G23 and L57–A77.

The protein belongs to the ATPase C chain family. In terms of assembly, F-type ATPases have 2 components, F(1) - the catalytic core - and F(0) - the membrane proton channel. F(1) has five subunits: alpha(3), beta(3), gamma(1), delta(1), epsilon(1). F(0) has four main subunits: a(1), b(1), b'(1) and c(10-14). The alpha and beta chains form an alternating ring which encloses part of the gamma chain. F(1) is attached to F(0) by a central stalk formed by the gamma and epsilon chains, while a peripheral stalk is formed by the delta, b and b' chains.

The protein resides in the plastid. The protein localises to the chloroplast thylakoid membrane. F(1)F(0) ATP synthase produces ATP from ADP in the presence of a proton or sodium gradient. F-type ATPases consist of two structural domains, F(1) containing the extramembraneous catalytic core and F(0) containing the membrane proton channel, linked together by a central stalk and a peripheral stalk. During catalysis, ATP synthesis in the catalytic domain of F(1) is coupled via a rotary mechanism of the central stalk subunits to proton translocation. Functionally, key component of the F(0) channel; it plays a direct role in translocation across the membrane. A homomeric c-ring of between 10-14 subunits forms the central stalk rotor element with the F(1) delta and epsilon subunits. This chain is ATP synthase subunit c, chloroplastic, found in Diacronema lutheri (Unicellular marine alga).